A 90-amino-acid chain; its full sequence is Conotoxin Mr22.1 (90 aa).

Residues 1–18 (MMTRVFFAMFFLMALTEG) form the signal peptide. A propeptide spanning residues 19–49 (WPRLYDSDCVRGRNMHITCFKDQTCGLTVKR) is cleaved from the precursor. A 6'-bromotryptophan modification is found at Trp75.

Belongs to the E superfamily. In terms of processing, contains 4 disulfide bonds. As to expression, expressed by the venom duct.

Its subcellular location is the secreted. This chain is Conotoxin Mr22.1, found in Conus marmoreus (Marble cone).